Consider the following 244-residue polypeptide: Probable septum site-determining protein MinC (244 aa).

This sequence belongs to the MinC family. In terms of assembly, interacts with MinD and FtsZ.

Functionally, cell division inhibitor that blocks the formation of polar Z ring septums. Rapidly oscillates between the poles of the cell to destabilize FtsZ filaments that have formed before they mature into polar Z rings. Prevents FtsZ polymerization. The protein is Probable septum site-determining protein MinC of Dichelobacter nodosus (strain VCS1703A).